The sequence spans 114 residues: MGLSRWHDKNSRPAEEKSEEMQQDAHYYALAASDSLNASVSNEYGNQVMNSFWKVGIDSPYVDDEAIRNRDVENNLPSLKQSVYNANEPNATSSAFSTASYAHETFDFRNLKLR.

The segment covering 1–20 (MGLSRWHDKNSRPAEEKSEE) has biased composition (basic and acidic residues). The disordered stretch occupies residues 1–22 (MGLSRWHDKNSRPAEEKSEEMQ).

Its function is as follows. May be involved in phosphatase regulation and/or generation of precursor metabolites and energy. This is an uncharacterized protein from Saccharomyces cerevisiae (strain ATCC 204508 / S288c) (Baker's yeast).